Here is a 362-residue protein sequence, read N- to C-terminus: MTDAGKRILVMAGGTGGHVFPALAVAKYLAQQGWQVRWLGTADRMEARLVPQYGFDIDFIDIKGVRGNGLVRKLAAPFKVVRSILQAKAVIAEFKPDVVLGMGGFASGPGGVAAKLAGVPLVLHEQNAIPGMTNKLLSRIASQVLCAFKNTFTQVKAKVVGNPIRRELIALGGEPKQTADEALKVLVVGGSLGAKVFNDLMPEVVAALSKQQSITVWHQVGKDNLAGVKSAYQQQGQDGGVNVAEFIDDMEAAYRWADVVLCRAGALTVSELAAVGLPSILVPYPHAVDDHQTRNAQVLVEAGAAFLLPQAILDVNKLVSKLQLLANDRAELARMGQRARDVAVLDATEQVAQVCIALAEKG.

Residues 15-17 (TGG), Asn-127, Arg-165, Ser-191, Ile-247, 266-271 (ALTVSE), and Gln-292 each bind UDP-N-acetyl-alpha-D-glucosamine.

This sequence belongs to the glycosyltransferase 28 family. MurG subfamily.

Its subcellular location is the cell inner membrane. It carries out the reaction di-trans,octa-cis-undecaprenyl diphospho-N-acetyl-alpha-D-muramoyl-L-alanyl-D-glutamyl-meso-2,6-diaminopimeloyl-D-alanyl-D-alanine + UDP-N-acetyl-alpha-D-glucosamine = di-trans,octa-cis-undecaprenyl diphospho-[N-acetyl-alpha-D-glucosaminyl-(1-&gt;4)]-N-acetyl-alpha-D-muramoyl-L-alanyl-D-glutamyl-meso-2,6-diaminopimeloyl-D-alanyl-D-alanine + UDP + H(+). The protein operates within cell wall biogenesis; peptidoglycan biosynthesis. Functionally, cell wall formation. Catalyzes the transfer of a GlcNAc subunit on undecaprenyl-pyrophosphoryl-MurNAc-pentapeptide (lipid intermediate I) to form undecaprenyl-pyrophosphoryl-MurNAc-(pentapeptide)GlcNAc (lipid intermediate II). This Shewanella oneidensis (strain ATCC 700550 / JCM 31522 / CIP 106686 / LMG 19005 / NCIMB 14063 / MR-1) protein is UDP-N-acetylglucosamine--N-acetylmuramyl-(pentapeptide) pyrophosphoryl-undecaprenol N-acetylglucosamine transferase.